The primary structure comprises 172 residues: Ribosome maturation factor RimM (172 aa).

A PRC barrel domain is found at 96–169 (EGYFYHFQLQ…RMEIKLLPGL (74 aa)).

The protein belongs to the RimM family. As to quaternary structure, binds ribosomal protein uS19.

The protein localises to the cytoplasm. An accessory protein needed during the final step in the assembly of 30S ribosomal subunit, possibly for assembly of the head region. Essential for efficient processing of 16S rRNA. May be needed both before and after RbfA during the maturation of 16S rRNA. It has affinity for free ribosomal 30S subunits but not for 70S ribosomes. The protein is Ribosome maturation factor RimM of Syntrophomonas wolfei subsp. wolfei (strain DSM 2245B / Goettingen).